A 595-amino-acid polypeptide reads, in one-letter code: Probable L-gulonolactone oxidase 1 (595 aa).

The N-terminal stretch at 1 to 18 is a signal peptide; that stretch reads MAFWLSLIFFCFCTFASS. Residues 47 to 229 enclose the FAD-binding PCMH-type domain; it reads SICEAAKVEY…SQVTFQLQPM (183 aa).

This sequence belongs to the oxygen-dependent FAD-linked oxidoreductase family. FAD is required as a cofactor.

The catalysed reaction is L-gulono-1,4-lactone + O2 = L-ascorbate + H2O2 + H(+). The protein operates within cofactor biosynthesis; L-ascorbate biosynthesis. May be involved in the biosynthesis of ascorbic acid. This chain is Probable L-gulonolactone oxidase 1, found in Arabidopsis thaliana (Mouse-ear cress).